The chain runs to 66 residues: Muscarinic toxin alpha (66 aa).

Disulfide bonds link cysteine 3–cysteine 24, cysteine 17–cysteine 42, cysteine 46–cysteine 58, and cysteine 59–cysteine 64.

Belongs to the three-finger toxin family. Short-chain subfamily. Aminergic toxin sub-subfamily. As to expression, expressed by the venom gland.

It localises to the secreted. Selectively binds with high-affinity to the a2B-adrenoceptor subtype (ADRA2B). The toxin reversibly binds to ADRA2B, and its mode of inhibition is non-competitive. The toxin has also been described to bind with high affinity to all muscarinic receptor subtypes (Ki=23 nM (on CHRM1), Ki=44 nM (on CHRM2), Ki=3 nM (on CHRM3), Ki=5 nM (on CHRM4), and Ki=8 nM (on CHRM5)) but no other data support these affinity values. This is Muscarinic toxin alpha from Dendroaspis polylepis polylepis (Black mamba).